The chain runs to 733 residues: Protein psiM (733 aa).

Residues 1 to 26 (MKKINNNKIFVLFLTILLYLLNITTA) form the signal peptide. Asn-22, Asn-65, and Asn-96 each carry an N-linked (GlcNAc...) asparagine glycan. Residues 27-672 (QKPVSINIKI…VCQKAALVST (646 aa)) lie on the Extracellular side of the membrane. The PA14 domain maps to 114–260 (NYDSDSGNYI…YDYCGVCNGD (147 aa)). Residues Asn-277, Asn-336, Asn-379, Asn-428, Asn-471, Asn-537, Asn-573, and Asn-641 are each glycosylated (N-linked (GlcNAc...) asparagine). Residues 673–693 (AVIASVVVVGAVVLGAAIFAG) traverse the membrane as a helical segment. Over 694–733 (KKGYDAWKTSQGNVMAASQANPLYTQSSNGGENPLYNSPT) the chain is Cytoplasmic.

Belongs to the prespore-cell-inducing factor family.

The protein localises to the membrane. This Dictyostelium discoideum (Social amoeba) protein is Protein psiM (psiM).